Consider the following 229-residue polypeptide: NAD(P)H-quinone oxidoreductase subunit K, chloroplastic (229 aa).

Residues C43, C44, C108, and C139 each contribute to the [4Fe-4S] cluster site.

It belongs to the complex I 20 kDa subunit family. NDH is composed of at least 16 different subunits, 5 of which are encoded in the nucleus. [4Fe-4S] cluster serves as cofactor.

It is found in the plastid. The protein localises to the chloroplast thylakoid membrane. The catalysed reaction is a plastoquinone + NADH + (n+1) H(+)(in) = a plastoquinol + NAD(+) + n H(+)(out). The enzyme catalyses a plastoquinone + NADPH + (n+1) H(+)(in) = a plastoquinol + NADP(+) + n H(+)(out). Functionally, NDH shuttles electrons from NAD(P)H:plastoquinone, via FMN and iron-sulfur (Fe-S) centers, to quinones in the photosynthetic chain and possibly in a chloroplast respiratory chain. The immediate electron acceptor for the enzyme in this species is believed to be plastoquinone. Couples the redox reaction to proton translocation, and thus conserves the redox energy in a proton gradient. The sequence is that of NAD(P)H-quinone oxidoreductase subunit K, chloroplastic from Coffea arabica (Arabian coffee).